A 249-amino-acid chain; its full sequence is ATP synthase subunit a, chloroplastic (249 aa).

A run of 5 helical transmembrane segments spans residues 40–60, 97–117, 136–156, 201–221, and 222–242; these read QVLI…VLAI, VPFI…GALL, INTT…AGLS, LVVV…VMFL, and GLFT…AYIG.

The protein belongs to the ATPase A chain family. F-type ATPases have 2 components, CF(1) - the catalytic core - and CF(0) - the membrane proton channel. CF(1) has five subunits: alpha(3), beta(3), gamma(1), delta(1), epsilon(1). CF(0) has four main subunits: a, b, b' and c.

Its subcellular location is the plastid. The protein resides in the chloroplast thylakoid membrane. Key component of the proton channel; it plays a direct role in the translocation of protons across the membrane. The polypeptide is ATP synthase subunit a, chloroplastic (Capsella bursa-pastoris (Shepherd's purse)).